We begin with the raw amino-acid sequence, 204 residues long: Holliday junction branch migration complex subunit RuvA (204 aa).

The interval 1-64 is domain I; it reads MIAKLTGILD…ETDQRLIGFT (64 aa). The interval 65 to 143 is domain II; it reads SAGERAWFRL…GLAGYASPVG (79 aa). Residues 144-154 are flexible linker; that stretch reads PGGEAFVAPPG. Residues 154 to 204 are domain III; that stretch reads GNASADAVSALQNLGFKPAVASSAVAAAVKELGEDAGLNDLVRVALKRAAG.

The protein belongs to the RuvA family. In terms of assembly, homotetramer. Forms an RuvA(8)-RuvB(12)-Holliday junction (HJ) complex. HJ DNA is sandwiched between 2 RuvA tetramers; dsDNA enters through RuvA and exits via RuvB. An RuvB hexamer assembles on each DNA strand where it exits the tetramer. Each RuvB hexamer is contacted by two RuvA subunits (via domain III) on 2 adjacent RuvB subunits; this complex drives branch migration. In the full resolvosome a probable DNA-RuvA(4)-RuvB(12)-RuvC(2) complex forms which resolves the HJ.

The protein resides in the cytoplasm. Its function is as follows. The RuvA-RuvB-RuvC complex processes Holliday junction (HJ) DNA during genetic recombination and DNA repair, while the RuvA-RuvB complex plays an important role in the rescue of blocked DNA replication forks via replication fork reversal (RFR). RuvA specifically binds to HJ cruciform DNA, conferring on it an open structure. The RuvB hexamer acts as an ATP-dependent pump, pulling dsDNA into and through the RuvAB complex. HJ branch migration allows RuvC to scan DNA until it finds its consensus sequence, where it cleaves and resolves the cruciform DNA. The chain is Holliday junction branch migration complex subunit RuvA from Novosphingobium aromaticivorans (strain ATCC 700278 / DSM 12444 / CCUG 56034 / CIP 105152 / NBRC 16084 / F199).